The sequence spans 113 residues: Na(+)/H(+) antiporter subunit C (113 aa).

The next 3 membrane-spanning stretches (helical) occupy residues 4–21 (LMAV…YLLL), 28–47 (VIIG…LTMG), and 67–89 (PLPQ…FILV).

This sequence belongs to the CPA3 antiporters (TC 2.A.63) subunit C family. As to quaternary structure, forms a heterooligomeric complex that consists of seven subunits: MrpA, MrpB, MrpC, MrpD, MrpE, MrpF and MrpG.

The protein localises to the cell membrane. Functionally, mrp complex is a Na(+)/H(+) antiporter that is considered to be the major Na(+) excretion system in B.subtilis. Has a major role in Na(+) resistance and a minor role in Na(+)- and K(+)-dependent pH homeostasis as compared to TetB. MrpA may be the actual Na(+)/H(+) antiporter, although the six other Mrp proteins are all required for Na(+)/H(+) antiport activity and Na(+) resistance. MrpA is required for initiation of sporulation when external Na(+) concentration increases. Also transports Li(+) but not K(+), Ca(2+) or Mg(2+). This chain is Na(+)/H(+) antiporter subunit C (mrpC), found in Bacillus subtilis (strain 168).